The sequence spans 119 residues: Large ribosomal subunit protein uL22 (119 aa).

Belongs to the universal ribosomal protein uL22 family. As to quaternary structure, part of the 50S ribosomal subunit.

This protein binds specifically to 23S rRNA; its binding is stimulated by other ribosomal proteins, e.g. L4, L17, and L20. It is important during the early stages of 50S assembly. It makes multiple contacts with different domains of the 23S rRNA in the assembled 50S subunit and ribosome. In terms of biological role, the globular domain of the protein is located near the polypeptide exit tunnel on the outside of the subunit, while an extended beta-hairpin is found that lines the wall of the exit tunnel in the center of the 70S ribosome. The protein is Large ribosomal subunit protein uL22 of Rickettsia canadensis (strain McKiel).